The chain runs to 657 residues: Glycogen debranching enzyme (657 aa).

The active-site Nucleophile is the aspartate 336. The Proton donor role is filled by glutamate 371. The tract at residues 460–479 (ANGEENRDGTNNNHSFNHGI) is disordered.

Belongs to the glycosyl hydrolase 13 family.

It carries out the reaction Hydrolysis of (1-&gt;6)-alpha-D-glucosidic linkages to branches with degrees of polymerization of three or four glucose residues in limit dextrin.. It participates in glycan degradation; glycogen degradation. Functionally, removes maltotriose and maltotetraose chains that are attached by 1,6-alpha-linkage to the limit dextrin main chain, generating a debranched limit dextrin. The polypeptide is Glycogen debranching enzyme (Enterobacter sp. (strain 638)).